The following is a 280-amino-acid chain: Phospholipase C D (280 aa).

Residues 258 to 280 (VPDPQIMPTQETTPTRGIPSGPC) form a disordered region.

This sequence belongs to the bacterial phospholipase C family.

The protein localises to the secreted. Its subcellular location is the cell wall. The catalysed reaction is a 1,2-diacyl-sn-glycero-3-phosphocholine + H2O = phosphocholine + a 1,2-diacyl-sn-glycerol + H(+). It carries out the reaction 1,2-dihexadecanoyl-sn-glycero-3-phosphocholine + H2O = 1,2-dihexadecanoyl-sn-glycerol + phosphocholine + H(+). Its function is as follows. Involved in virulence. Induces cytotoxic effects on mouse macrophage cell lines, via direct or indirect enzymatic hydrolysis of cell membrane phospholipids. Hydrolyzes phosphatidylcholine. Does not have hemolytic activity. The sequence is that of Phospholipase C D from Mycobacterium tuberculosis (strain ATCC 25618 / H37Rv).